A 122-amino-acid chain; its full sequence is Large ribosomal subunit protein uL14 (122 aa).

The protein belongs to the universal ribosomal protein uL14 family. Part of the 50S ribosomal subunit. Forms a cluster with proteins L3 and L19. In the 70S ribosome, L14 and L19 interact and together make contacts with the 16S rRNA in bridges B5 and B8.

Binds to 23S rRNA. Forms part of two intersubunit bridges in the 70S ribosome. The polypeptide is Large ribosomal subunit protein uL14 (Polynucleobacter necessarius subsp. necessarius (strain STIR1)).